Consider the following 153-residue polypeptide: Nuclear cap-binding protein subunit 2 (153 aa).

MRNA contacts are provided by residues Tyr-17, Tyr-40, 109 to 113 (RTDWD), 120 to 124 (RQYGR), and 130 to 131 (QV). Positions 37–115 (CTLYVGNLSF…RIVRTDWDAG (79 aa)) constitute an RRM domain.

It belongs to the RRM NCBP2 family. In terms of assembly, component of the nuclear cap-binding complex (CBC), a heterodimer composed of ncbp1/cbp80 and ncbp2/cbp20 that interacts with m7GpppG-capped RNA.

Its subcellular location is the nucleus. It localises to the cytoplasm. Its function is as follows. Component of the cap-binding complex (CBC), which binds co-transcriptionally to the 5' cap of pre-mRNAs and is involved in various processes such as pre-mRNA splicing, translation regulation, nonsense-mediated mRNA decay, RNA-mediated gene silencing (RNAi) by microRNAs (miRNAs) and mRNA export. The CBC complex is involved in mRNA export from the nucleus, leading to the recruitment of the mRNA export machinery to the 5' end of mRNA and to mRNA export in a 5' to 3' direction through the nuclear pore. The CBC complex is also involved in mediating U snRNA and intronless mRNAs export from the nucleus. The CBC complex is essential for a pioneer round of mRNA translation, before steady state translation when the CBC complex is replaced by cytoplasmic cap-binding protein eIF4E. The pioneer round of mRNA translation mediated by the CBC complex plays a central role in nonsense-mediated mRNA decay (NMD), NMD only taking place in mRNAs bound to the CBC complex, but not on eIF4E-bound mRNAs. The CBC complex enhances NMD in mRNAs containing at least one exon-junction complex (EJC), promoting the interaction between upf1 and upf2. The CBC complex is also involved in 'failsafe' NMD, which is independent of the EJC complex, while it does not participate in Staufen-mediated mRNA decay (SMD). During cell proliferation, the CBC complex is also involved in microRNAs (miRNAs) biogenesis via its interaction with srrt/ars2, thereby being required for miRNA-mediated RNA interference. The CBC complex also acts as a negative regulator of parn, thereby acting as an inhibitor of mRNA deadenylation. In the CBC complex, ncbp2/cbp20 recognizes and binds capped RNAs (m7GpppG-capped RNA) but requires ncbp1/cbp80 to stabilize the movement of its N-terminal loop and lock the CBC into a high affinity cap-binding state with the cap structure. The conventional cap-binding complex with NCBP2 binds both small nuclear RNA (snRNA) and messenger (mRNA) and is involved in their export from the nucleus. This Xenopus laevis (African clawed frog) protein is Nuclear cap-binding protein subunit 2 (ncbp2).